A 96-amino-acid chain; its full sequence is Conantokin Rl-C (96 aa).

Residues 1–21 (MQLYTYLYLLVPLVTFHLILG) form the signal peptide. Residues 22 to 78 (TGTLDHGDALTERRSADATALKPEPVLLQKSSARSTDDNGKDTQMKRIFKKRRNKAR) constitute a propeptide that is removed on maturation. Positions 36-85 (SADATALKPEPVLLQKSSARSTDDNGKDTQMKRIFKKRRNKARGEEELSE) are disordered. Positions 56-66 (STDDNGKDTQM) are enriched in basic and acidic residues. E81 contacts a divalent metal cation. 5 positions are modified to 4-carboxyglutamate: E81, E82, E85, E89, and E93. 3 residues coordinate a divalent metal cation: E85, E89, and E93. N96 is subject to Asparagine amide.

The protein belongs to the conotoxin B superfamily. Ca(2+) is required as a cofactor. Requires Mg(2+) as cofactor. As to expression, expressed by the venom duct.

The protein resides in the secreted. In terms of biological role, conantokins inhibit N-methyl-D-aspartate (NMDA) receptors. This toxin has antagonist activity on NR2B/GRIN2B (IC(50)=1.4 uM) and NR2A/GRIN2A (IC(50)=2.9 uM) subunits, when tested on rat receptors. The sequence is that of Conantokin Rl-C from Conus rolani (Cone snail).